Consider the following 101-residue polypeptide: DNA-binding protein Fis (101 aa).

A DNA-binding region (H-T-H motif) is located at residues 77-96; that stretch reads QTRAANMLGINRGTLRKKLK.

The protein belongs to the transcriptional regulatory Fis family. As to quaternary structure, homodimer.

Its function is as follows. Activates ribosomal RNA transcription. Plays a direct role in upstream activation of rRNA promoters. This Shewanella halifaxensis (strain HAW-EB4) protein is DNA-binding protein Fis.